The chain runs to 836 residues: Translation initiation factor IF-2 (836 aa).

The disordered stretch occupies residues 1–233 (MSDTDGKKPL…RSLAAMKRKQ (233 aa)). Residues 18–27 (SGQVKQSFSH) are compositionally biased toward polar residues. Residues 50–60 (SGSSTTTSSPS) are compositionally biased toward low complexity. Residues 88–156 (KLREVEDAKR…AARRAEEAKR (69 aa)) are compositionally biased toward basic and acidic residues. Over residues 167 to 176 (PAESRASAPP) the composition is skewed to low complexity. The segment covering 185–206 (SRKEREREADRDRTTKKDDSRR) has biased composition (basic and acidic residues). Residues 333–501 (PRPPIITIMG…NIALQAEILD (169 aa)) enclose the tr-type G domain. The interval 342–349 (GHVDHGKT) is G1. 342–349 (GHVDHGKT) serves as a coordination point for GTP. The segment at 367 to 371 (GITQH) is G2. The interval 389–392 (DTPG) is G3. GTP is bound by residues 389 to 393 (DTPGH) and 443 to 446 (NKID). The tract at residues 443–446 (NKID) is G4. Residues 479–481 (SAK) are G5.

This sequence belongs to the TRAFAC class translation factor GTPase superfamily. Classic translation factor GTPase family. IF-2 subfamily.

The protein localises to the cytoplasm. One of the essential components for the initiation of protein synthesis. Protects formylmethionyl-tRNA from spontaneous hydrolysis and promotes its binding to the 30S ribosomal subunits. Also involved in the hydrolysis of GTP during the formation of the 70S ribosomal complex. In Cereibacter sphaeroides (strain ATCC 17023 / DSM 158 / JCM 6121 / CCUG 31486 / LMG 2827 / NBRC 12203 / NCIMB 8253 / ATH 2.4.1.) (Rhodobacter sphaeroides), this protein is Translation initiation factor IF-2.